A 148-amino-acid polypeptide reads, in one-letter code: [Ribosomal protein bS18]-alanine N-acetyltransferase (148 aa).

Residues 2–147 (NTISSLETTD…DAIIMALPIS (146 aa)) enclose the N-acetyltransferase domain. 69–71 (IAV) provides a ligand contact to acetyl-CoA. Glu-103 functions as the Proton acceptor in the catalytic mechanism. Asn-108 contacts acetyl-CoA. The active-site Proton donor is the Tyr-115.

The protein belongs to the acetyltransferase family. RimI subfamily.

The protein localises to the cytoplasm. It carries out the reaction N-terminal L-alanyl-[ribosomal protein bS18] + acetyl-CoA = N-terminal N(alpha)-acetyl-L-alanyl-[ribosomal protein bS18] + CoA + H(+). Functionally, acetylates the N-terminal alanine of ribosomal protein bS18. The polypeptide is [Ribosomal protein bS18]-alanine N-acetyltransferase (Escherichia coli O157:H7).